The following is a 490-amino-acid chain: Adenylosuccinate lyase (490 aa).

Ala-2 carries the N-acetylalanine modification. Residues 26–27 (RY), 91–93 (RHD), and 117–118 (TS) each bind substrate. N6-acetyllysine is present on Lys-153. His-165 acts as the Proton donor/acceptor in catalysis. Position 247 (Gln-247) interacts with substrate. Ser-295 functions as the Proton donor/acceptor in the catalytic mechanism. Position 301 is an N6-acetyllysine (Lys-301). Positions 309, 335, 340, and 344 each coordinate substrate. Residue Lys-421 forms a Glycyl lysine isopeptide (Lys-Gly) (interchain with G-Cter in SUMO1) linkage.

This sequence belongs to the lyase 1 family. Adenylosuccinate lyase subfamily. In terms of assembly, homotetramer. Residues from neighboring subunits contribute catalytic and substrate-binding residues to each active site.

The catalysed reaction is N(6)-(1,2-dicarboxyethyl)-AMP = fumarate + AMP. It catalyses the reaction (2S)-2-[5-amino-1-(5-phospho-beta-D-ribosyl)imidazole-4-carboxamido]succinate = 5-amino-1-(5-phospho-beta-D-ribosyl)imidazole-4-carboxamide + fumarate. Its pathway is purine metabolism; AMP biosynthesis via de novo pathway; AMP from IMP: step 2/2. The protein operates within purine metabolism; IMP biosynthesis via de novo pathway; 5-amino-1-(5-phospho-D-ribosyl)imidazole-4-carboxamide from 5-amino-1-(5-phospho-D-ribosyl)imidazole-4-carboxylate: step 2/2. In terms of biological role, catalyzes two non-sequential steps in de novo AMP synthesis: converts (S)-2-(5-amino-1-(5-phospho-D-ribosyl)imidazole-4-carboxamido)succinate (SAICAR) to fumarate plus 5-amino-1-(5-phospho-D-ribosyl)imidazole-4-carboxamide, and thereby also contributes to de novo IMP synthesis, and converts succinyladenosine monophosphate (SAMP) to AMP and fumarate. This chain is Adenylosuccinate lyase (ADSL), found in Bos taurus (Bovine).